Consider the following 119-residue polypeptide: U9-hexatoxin-Hi1 (119 aa).

Residues 1–17 form the signal peptide; sequence MKLYLVILVTSVALAAA. Positions 18-53 are excised as a propeptide; sequence SPTRTKEEPIEDELLEALLSVEKSLFNEETTVMEKR. Intrachain disulfides connect C55-C73, C66-C79, C70-C117, and C72-C88.

The protein belongs to the neurotoxin 03 (Tx2) family. 03 subfamily. As to expression, expressed by the venom gland.

Its subcellular location is the secreted. Its function is as follows. Probable ion channel inhibitor. The chain is U9-hexatoxin-Hi1 from Hadronyche infensa (Fraser island funnel-web spider).